The primary structure comprises 431 residues: Large envelope protein (431 aa).

Gly-2 is lipidated: N-myristoyl glycine; by host. Residues 2-148 (GNNIKVTFNP…PPLRDTHPHL (147 aa)) form a pre-S1 region. Residues 2 to 207 (GNNIKVTFNP…PSTTGDPALS (206 aa)) form a pre-S region. The Virion surface; in external conformation segment spans residues 2-214 (GNNIKVTFNP…ALSPEMSPSS (213 aa)). Residues 2-286 (GNNIKVTFNP…NGFRWMYLRR (285 aa)) lie on the Intravirion; in internal conformation side of the membrane. Asn-3 is a glycosylation site (N-linked (GlcNAc...) asparagine). A disordered region spans residues 115 to 146 (IPRGLVPPQTPTNRDQGRKPTPPTPPLRDTHP). The pre-S2 stretch occupies residues 149–207 (TMKNQTFRLQGFVDGLRDLTTTERYHNAYGDPFTTLSPVVPTVSTILSPPSTTGDPALS). A helical membrane pass occupies residues 215 to 235 (LLGLLAGLQVVYFLWTKILTI). At 236–286 (AQNLDWWWTSLSFPGGIPECTGQNSQFQTCKHLPTSCPPTCNGFRWMYLRR) the chain is on the intravirion; in external conformation side. Residues 287-307 (FIIYLLVLLLCLIFLLVLLDW) traverse the membrane as a helical segment. Topologically, residues 308-379 (KGLIPVCPLQ…WALARFSWLN (72 aa)) are virion surface. An N-linked (GlcNAc...) asparagine; by host glycan is attached at Asn-351. Residues 380–400 (LLVPLLQWLGGISLIAWFLLI) traverse the membrane as a helical segment. Residues 401–406 (WMIWFW) are Intravirion-facing. A helical transmembrane segment spans residues 407–429 (GPALLSILPPFIPIFVLFFLIWV). Residues 430 to 431 (YI) are Virion surface-facing.

This sequence belongs to the orthohepadnavirus major surface antigen family. In terms of assembly, in its internal form (Li-HBsAg), interacts with the capsid protein and with the isoform S. Interacts with host chaperone CANX. As to quaternary structure, associates with host chaperone CANX through its pre-S2 N glycan; this association may be essential for isoform M proper secretion. Interacts with isoform L. Interacts with the antigens of satellite virus HDV (HDVAgs); this interaction is required for encapsidation of HDV genomic RNA. Post-translationally, isoform M is N-terminally acetylated by host at a ratio of 90%, and N-glycosylated by host at the pre-S2 region. In terms of processing, myristoylated.

The protein localises to the virion membrane. In terms of biological role, the large envelope protein exists in two topological conformations, one which is termed 'external' or Le-HBsAg and the other 'internal' or Li-HBsAg. In its external conformation the protein attaches the virus to cell receptors and thereby initiating infection. This interaction determines the species specificity and liver tropism. This attachment induces virion internalization predominantly through caveolin-mediated endocytosis. The large envelope protein also assures fusion between virion membrane and endosomal membrane. In its internal conformation the protein plays a role in virion morphogenesis and mediates the contact with the nucleocapsid like a matrix protein. The middle envelope protein plays an important role in the budding of the virion. It is involved in the induction of budding in a nucleocapsid independent way. In this process the majority of envelope proteins bud to form subviral lipoprotein particles of 22 nm of diameter that do not contain a nucleocapsid. The polypeptide is Large envelope protein (Woodchuck hepatitis B virus (isolate 59) (WHV)).